Here is a 167-residue protein sequence, read N- to C-terminus: Phosphopantetheine adenylyltransferase (167 aa).

S10 contacts substrate. ATP-binding positions include 10–11 (SF) and H18. Residues K42, A79, and R93 each contribute to the substrate site. Residues 94 to 96 (GLR), E104, and 129 to 135 (VGHITAT) contribute to the ATP site.

It belongs to the bacterial CoaD family. Homohexamer. Requires Mg(2+) as cofactor.

It localises to the cytoplasm. It catalyses the reaction (R)-4'-phosphopantetheine + ATP + H(+) = 3'-dephospho-CoA + diphosphate. The protein operates within cofactor biosynthesis; coenzyme A biosynthesis; CoA from (R)-pantothenate: step 4/5. Reversibly transfers an adenylyl group from ATP to 4'-phosphopantetheine, yielding dephospho-CoA (dPCoA) and pyrophosphate. The protein is Phosphopantetheine adenylyltransferase of Methylocella silvestris (strain DSM 15510 / CIP 108128 / LMG 27833 / NCIMB 13906 / BL2).